A 280-amino-acid chain; its full sequence is Truncated lectin 2 (280 aa).

Positions 1 to 26 (MSSSNFSCILSISLTFFILLLNKVNS) are cleaved as a signal peptide. Residues Glu-148 and Asp-150 each coordinate Mn(2+). Residues Asp-150, Phe-152, Asn-154, and Asp-158 each contribute to the Ca(2+) site. Asp-158 contacts Mn(2+). An N-linked (GlcNAc...) asparagine glycan is attached at Asn-163. Position 170 (His-170) interacts with Mn(2+). An N-linked (GlcNAc...) asparagine glycan is attached at Asn-272.

Belongs to the leguminous lectin family.

This is Truncated lectin 2 (LEC2) from Medicago truncatula (Barrel medic).